The following is a 264-amino-acid chain: tRNA pseudouridine synthase A (264 aa).

D52 serves as the catalytic Nucleophile. Residue Y110 participates in substrate binding.

Belongs to the tRNA pseudouridine synthase TruA family. Homodimer.

The enzyme catalyses uridine(38/39/40) in tRNA = pseudouridine(38/39/40) in tRNA. Its function is as follows. Formation of pseudouridine at positions 38, 39 and 40 in the anticodon stem and loop of transfer RNAs. The sequence is that of tRNA pseudouridine synthase A from Wigglesworthia glossinidia brevipalpis.